A 264-amino-acid chain; its full sequence is uncharacterized protein (264 aa).

The helical transmembrane segment at 7–27 (LTLGICLVLLIILIVGYVIMT) threads the bilayer.

The protein belongs to the staphylococcal tandem lipoprotein family.

The protein localises to the cell membrane. This is an uncharacterized protein from Staphylococcus aureus (strain MRSA252).